The following is a 610-amino-acid chain: V-type proton ATPase catalytic subunit A (610 aa).

245 to 252 (GAFGCGKT) lines the ATP pocket.

Belongs to the ATPase alpha/beta chains family. As to quaternary structure, V-ATPase is a heteromultimeric enzyme composed of a peripheral catalytic V1 complex (main components: subunits A, B, C, D, E, and F) attached to an integral membrane V0 proton pore complex (main component: the proteolipid protein).

The enzyme catalyses ATP + H2O + 4 H(+)(in) = ADP + phosphate + 5 H(+)(out). Catalytic subunit of the peripheral V1 complex of vacuolar ATPase. V-ATPase vacuolar ATPase is responsible for acidifying a variety of intracellular compartments in eukaryotic cells. The sequence is that of V-type proton ATPase catalytic subunit A from Trypanosoma congolense.